A 190-amino-acid chain; its full sequence is Large ribosomal subunit protein uL6A (190 aa).

It belongs to the universal ribosomal protein uL6 family. In terms of assembly, component of the large ribosomal subunit (LSU). Mature yeast ribosomes consist of a small (40S) and a large (60S) subunit. The 40S small subunit contains 1 molecule of ribosomal RNA (18S rRNA) and at least 33 different proteins. The large 60S subunit contains 3 rRNA molecules (25S, 5.8S and 5S rRNA) and at least 46 different proteins. uL6 lines the binding pocket for eukaryotic elongation factor 2 (eEF2).

The protein resides in the cytoplasm. The protein localises to the nucleus. Its function is as follows. Component of the ribosome, a large ribonucleoprotein complex responsible for the synthesis of proteins in the cell. The small ribosomal subunit (SSU) binds messenger RNAs (mRNAs) and translates the encoded message by selecting cognate aminoacyl-transfer RNA (tRNA) molecules. The large subunit (LSU) contains the ribosomal catalytic site termed the peptidyl transferase center (PTC), which catalyzes the formation of peptide bonds, thereby polymerizing the amino acids delivered by tRNAs into a polypeptide chain. The nascent polypeptides leave the ribosome through a tunnel in the LSU and interact with protein factors that function in enzymatic processing, targeting, and the membrane insertion of nascent chains at the exit of the ribosomal tunnel. This chain is Large ribosomal subunit protein uL6A (rpl901), found in Schizosaccharomyces pombe (strain 972 / ATCC 24843) (Fission yeast).